The following is a 53-amino-acid chain: UPF0391 membrane protein YtjA (53 aa).

2 helical membrane passes run 4 to 24 (WGII…GGLA) and 30 to 48 (AAKI…SLFM).

It belongs to the UPF0391 family.

The protein resides in the cell membrane. This Escherichia coli O6:K15:H31 (strain 536 / UPEC) protein is UPF0391 membrane protein YtjA.